The following is a 277-amino-acid chain: Large ribosomal subunit protein uL2 (277 aa).

A disordered region spans residues 212–277 (RWRGKRPHVR…KFIVRGRKSK (66 aa)). The segment covering 254–277 (TAGKKTRDKKKASTKFIVRGRKSK) has biased composition (basic residues).

Belongs to the universal ribosomal protein uL2 family. Part of the 50S ribosomal subunit. Forms a bridge to the 30S subunit in the 70S ribosome.

Functionally, one of the primary rRNA binding proteins. Required for association of the 30S and 50S subunits to form the 70S ribosome, for tRNA binding and peptide bond formation. It has been suggested to have peptidyltransferase activity; this is somewhat controversial. Makes several contacts with the 16S rRNA in the 70S ribosome. The sequence is that of Large ribosomal subunit protein uL2 from Leuconostoc mesenteroides subsp. mesenteroides (strain ATCC 8293 / DSM 20343 / BCRC 11652 / CCM 1803 / JCM 6124 / NCDO 523 / NBRC 100496 / NCIMB 8023 / NCTC 12954 / NRRL B-1118 / 37Y).